The chain runs to 101 residues: UPF0235 protein MmarC7_0309 (101 aa).

Belongs to the UPF0235 family.

The polypeptide is UPF0235 protein MmarC7_0309 (Methanococcus maripaludis (strain C7 / ATCC BAA-1331)).